A 148-amino-acid polypeptide reads, in one-letter code: 3-hydroxyacyl-[acyl-carrier-protein] dehydratase FabZ (148 aa).

H48 is a catalytic residue.

The protein belongs to the thioester dehydratase family. FabZ subfamily.

Its subcellular location is the cytoplasm. The catalysed reaction is a (3R)-hydroxyacyl-[ACP] = a (2E)-enoyl-[ACP] + H2O. In terms of biological role, involved in unsaturated fatty acids biosynthesis. Catalyzes the dehydration of short chain beta-hydroxyacyl-ACPs and long chain saturated and unsaturated beta-hydroxyacyl-ACPs. In Acinetobacter baylyi (strain ATCC 33305 / BD413 / ADP1), this protein is 3-hydroxyacyl-[acyl-carrier-protein] dehydratase FabZ.